A 657-amino-acid chain; its full sequence is 1-deoxy-D-xylulose-5-phosphate synthase (657 aa).

Thiamine diphosphate-binding positions include His73 and 113–115 (SHA). Position 145 (Asp145) interacts with Mg(2+). Thiamine diphosphate-binding positions include 146–147 (GA), Asn175, Tyr293, and Glu375. A Mg(2+)-binding site is contributed by Asn175.

It belongs to the transketolase family. DXPS subfamily. As to quaternary structure, homodimer. Requires Mg(2+) as cofactor. The cofactor is thiamine diphosphate.

It carries out the reaction D-glyceraldehyde 3-phosphate + pyruvate + H(+) = 1-deoxy-D-xylulose 5-phosphate + CO2. It participates in metabolic intermediate biosynthesis; 1-deoxy-D-xylulose 5-phosphate biosynthesis; 1-deoxy-D-xylulose 5-phosphate from D-glyceraldehyde 3-phosphate and pyruvate: step 1/1. Catalyzes the acyloin condensation reaction between C atoms 2 and 3 of pyruvate and glyceraldehyde 3-phosphate to yield 1-deoxy-D-xylulose-5-phosphate (DXP). The protein is 1-deoxy-D-xylulose-5-phosphate synthase of Renibacterium salmoninarum (strain ATCC 33209 / DSM 20767 / JCM 11484 / NBRC 15589 / NCIMB 2235).